The following is a 1295-amino-acid chain: Phosphoribosylformylglycinamidine synthase (1295 aa).

Residues 305–327 form a disordered region; sequence WPGAATGSGGEIRDEGATGRGAK. Residues 307–318, 386–388, and Ala678 contribute to the ATP site; these read GAATGSGGEIRD and TGY. 4 residues coordinate Mg(2+): Asp679, Glu718, Asn722, and Asp884. Ser886 is a binding site for ATP. In terms of domain architecture, Glutamine amidotransferase type-1 spans 1042–1295; it reads VAVLREQGVN…IFRNARKQLG (254 aa). Residue Cys1135 is the Nucleophile of the active site. Catalysis depends on residues His1260 and Glu1262.

The protein in the N-terminal section; belongs to the FGAMS family. Monomer.

Its subcellular location is the cytoplasm. The enzyme catalyses N(2)-formyl-N(1)-(5-phospho-beta-D-ribosyl)glycinamide + L-glutamine + ATP + H2O = 2-formamido-N(1)-(5-O-phospho-beta-D-ribosyl)acetamidine + L-glutamate + ADP + phosphate + H(+). The protein operates within purine metabolism; IMP biosynthesis via de novo pathway; 5-amino-1-(5-phospho-D-ribosyl)imidazole from N(2)-formyl-N(1)-(5-phospho-D-ribosyl)glycinamide: step 1/2. Phosphoribosylformylglycinamidine synthase involved in the purines biosynthetic pathway. Catalyzes the ATP-dependent conversion of formylglycinamide ribonucleotide (FGAR) and glutamine to yield formylglycinamidine ribonucleotide (FGAM) and glutamate. The polypeptide is Phosphoribosylformylglycinamidine synthase (Salmonella typhi).